A 299-amino-acid polypeptide reads, in one-letter code: Putative peptidyl-prolyl cis-trans isomerase HP_0175 (299 aa).

Positions 1 to 21 (MKKNILNLALVGALSTSFLMA) are cleaved as a signal peptide. In terms of domain architecture, PpiC spans 154–253 (KQEAHARHIL…FGYHIIYLIS (100 aa)).

The enzyme catalyses [protein]-peptidylproline (omega=180) = [protein]-peptidylproline (omega=0). In Helicobacter pylori (strain ATCC 700392 / 26695) (Campylobacter pylori), this protein is Putative peptidyl-prolyl cis-trans isomerase HP_0175.